Here is a 152-residue protein sequence, read N- to C-terminus: Large ribosomal subunit protein bL9 (152 aa).

Belongs to the bacterial ribosomal protein bL9 family.

Binds to the 23S rRNA. The polypeptide is Large ribosomal subunit protein bL9 (Mycobacterium sp. (strain JLS)).